A 695-amino-acid chain; its full sequence is Eukaryotic translation initiation factor 3 subunit B (695 aa).

Positions 1-10 (MAKKKGDEKA) are enriched in basic and acidic residues. Residues 1-43 (MAKKKGDEKANPAPQSDNEEQNFEEEPDFDDPEDFVEIPEEEL) form a disordered region. Residues 17-43 (DNEEQNFEEEPDFDDPEDFVEIPEEEL) are compositionally biased toward acidic residues. The 85-residue stretch at 60–144 (NVVVVDGCPQ…HTFLVNLFTD (85 aa)) folds into the RRM domain. 4 WD repeats span residues 164–205 (KVQS…PLLL), 295–335 (PPDE…LLDK), 338–373 (IKIP…TLLE), and 444–486 (EIKE…APTL).

Belongs to the eIF-3 subunit B family. Component of the eukaryotic translation initiation factor 3 (eIF-3) complex.

Its subcellular location is the cytoplasm. Its function is as follows. RNA-binding component of the eukaryotic translation initiation factor 3 (eIF-3) complex, which is involved in protein synthesis of a specialized repertoire of mRNAs and, together with other initiation factors, stimulates binding of mRNA and methionyl-tRNAi to the 40S ribosome. The eIF-3 complex specifically targets and initiates translation of a subset of mRNAs involved in cell proliferation. This is Eukaryotic translation initiation factor 3 subunit B from Bombyx mori (Silk moth).